Here is a 274-residue protein sequence, read N- to C-terminus: 2-dehydro-3-deoxyphosphooctonate aldolase (274 aa).

Belongs to the KdsA family.

It localises to the cytoplasm. The enzyme catalyses D-arabinose 5-phosphate + phosphoenolpyruvate + H2O = 3-deoxy-alpha-D-manno-2-octulosonate-8-phosphate + phosphate. It functions in the pathway carbohydrate biosynthesis; 3-deoxy-D-manno-octulosonate biosynthesis; 3-deoxy-D-manno-octulosonate from D-ribulose 5-phosphate: step 2/3. The protein operates within bacterial outer membrane biogenesis; lipopolysaccharide biosynthesis. This chain is 2-dehydro-3-deoxyphosphooctonate aldolase, found in Rickettsia felis (strain ATCC VR-1525 / URRWXCal2) (Rickettsia azadi).